A 360-amino-acid chain; its full sequence is Phospho-N-acetylmuramoyl-pentapeptide-transferase (360 aa).

Helical transmembrane passes span 21-41 (YLTFRSVLALLTALLLSLWIG), 73-93 (TMGGLMILATITVSTLLWGDL), 94-114 (SNPYIWFSLFVLLGYGAIGFV), 132-152 (WKYFWLSLVSLIAIFGMYALG), 168-188 (IMPQLGLFYVVLAYFVIVGTS), 199-219 (GLAIMPTVFVAGAFAIIAWAT), 239-259 (LVIFCTAIVGAGLGFLWFNTY), 263-283 (VFMGDVGSLALGGALGTIAVL), 288-308 (FLLVIMGGVFVMETVSVILQV), and 338-358 (VIIRFWIISLMLVLFGLVTLK).

It belongs to the glycosyltransferase 4 family. MraY subfamily. Mg(2+) is required as a cofactor.

The protein localises to the cell inner membrane. It carries out the reaction UDP-N-acetyl-alpha-D-muramoyl-L-alanyl-gamma-D-glutamyl-meso-2,6-diaminopimeloyl-D-alanyl-D-alanine + di-trans,octa-cis-undecaprenyl phosphate = di-trans,octa-cis-undecaprenyl diphospho-N-acetyl-alpha-D-muramoyl-L-alanyl-D-glutamyl-meso-2,6-diaminopimeloyl-D-alanyl-D-alanine + UMP. It participates in cell wall biogenesis; peptidoglycan biosynthesis. Catalyzes the initial step of the lipid cycle reactions in the biosynthesis of the cell wall peptidoglycan: transfers peptidoglycan precursor phospho-MurNAc-pentapeptide from UDP-MurNAc-pentapeptide onto the lipid carrier undecaprenyl phosphate, yielding undecaprenyl-pyrophosphoryl-MurNAc-pentapeptide, known as lipid I. The protein is Phospho-N-acetylmuramoyl-pentapeptide-transferase of Mannheimia succiniciproducens (strain KCTC 0769BP / MBEL55E).